A 103-amino-acid polypeptide reads, in one-letter code: Large ribosomal subunit protein bL21 (103 aa).

It belongs to the bacterial ribosomal protein bL21 family. In terms of assembly, part of the 50S ribosomal subunit. Contacts protein L20.

In terms of biological role, this protein binds to 23S rRNA in the presence of protein L20. The polypeptide is Large ribosomal subunit protein bL21 (Cupriavidus metallidurans (strain ATCC 43123 / DSM 2839 / NBRC 102507 / CH34) (Ralstonia metallidurans)).